The sequence spans 276 residues: Formamidopyrimidine-DNA glycosylase (276 aa).

Pro2 serves as the catalytic Schiff-base intermediate with DNA. The Proton donor role is filled by Glu3. Lys60 serves as the catalytic Proton donor; for beta-elimination activity. DNA contacts are provided by His93, Arg112, and Arg155. The FPG-type zinc-finger motif lies at 240-274 (LVYGRKDEACTKCGAEIIRFVVGGRGTHICPDCQK). Arg264 acts as the Proton donor; for delta-elimination activity in catalysis.

It belongs to the FPG family. Monomer. It depends on Zn(2+) as a cofactor.

It catalyses the reaction Hydrolysis of DNA containing ring-opened 7-methylguanine residues, releasing 2,6-diamino-4-hydroxy-5-(N-methyl)formamidopyrimidine.. It carries out the reaction 2'-deoxyribonucleotide-(2'-deoxyribose 5'-phosphate)-2'-deoxyribonucleotide-DNA = a 3'-end 2'-deoxyribonucleotide-(2,3-dehydro-2,3-deoxyribose 5'-phosphate)-DNA + a 5'-end 5'-phospho-2'-deoxyribonucleoside-DNA + H(+). Functionally, involved in base excision repair of DNA damaged by oxidation or by mutagenic agents. Acts as a DNA glycosylase that recognizes and removes damaged bases. Has a preference for oxidized purines, such as 7,8-dihydro-8-oxoguanine (8-oxoG). Has AP (apurinic/apyrimidinic) lyase activity and introduces nicks in the DNA strand. Cleaves the DNA backbone by beta-delta elimination to generate a single-strand break at the site of the removed base with both 3'- and 5'-phosphates. The sequence is that of Formamidopyrimidine-DNA glycosylase from Brevibacillus brevis (strain 47 / JCM 6285 / NBRC 100599).